Reading from the N-terminus, the 168-residue chain is Shikimate kinase (168 aa).

Residue 12-17 (GAGKST) participates in ATP binding. S16 lines the Mg(2+) pocket. 3 residues coordinate substrate: D34, R58, and G80. ATP is bound at residue R117. R136 is a binding site for substrate. Residue R153 participates in ATP binding.

This sequence belongs to the shikimate kinase family. In terms of assembly, monomer. It depends on Mg(2+) as a cofactor.

It localises to the cytoplasm. The catalysed reaction is shikimate + ATP = 3-phosphoshikimate + ADP + H(+). Its pathway is metabolic intermediate biosynthesis; chorismate biosynthesis; chorismate from D-erythrose 4-phosphate and phosphoenolpyruvate: step 5/7. In terms of biological role, catalyzes the specific phosphorylation of the 3-hydroxyl group of shikimic acid using ATP as a cosubstrate. The sequence is that of Shikimate kinase from Rhodococcus jostii (strain RHA1).